The chain runs to 396 residues: Elongation factor Tu (396 aa).

Residues 10–205 form the tr-type G domain; sequence KSHANIGTIG…AVDEYIPTPE (196 aa). Residues 19 to 26 form a G1 region; sequence GHVDHGKT. 19-26 provides a ligand contact to GTP; it reads GHVDHGKT. Threonine 26 lines the Mg(2+) pocket. A G2 region spans residues 61 to 65; that stretch reads GITIS. Positions 82–85 are G3; the sequence is DCPG. Residues 82-86 and 137-140 contribute to the GTP site; these read DCPGH and NKCD. The segment at 137–140 is G4; it reads NKCD. Residues 175–177 are G5; the sequence is SAL.

It belongs to the TRAFAC class translation factor GTPase superfamily. Classic translation factor GTPase family. EF-Tu/EF-1A subfamily. As to quaternary structure, monomer.

The protein resides in the cytoplasm. It catalyses the reaction GTP + H2O = GDP + phosphate + H(+). GTP hydrolase that promotes the GTP-dependent binding of aminoacyl-tRNA to the A-site of ribosomes during protein biosynthesis. This is Elongation factor Tu from Bacillus licheniformis (strain ATCC 14580 / DSM 13 / JCM 2505 / CCUG 7422 / NBRC 12200 / NCIMB 9375 / NCTC 10341 / NRRL NRS-1264 / Gibson 46).